We begin with the raw amino-acid sequence, 438 residues long: Trigger factor (438 aa).

The region spanning 163–248 is the PPIase FKBP-type domain; it reads GEIAVLDFAA…VHAVKERKLP (86 aa).

Belongs to the FKBP-type PPIase family. Tig subfamily.

Its subcellular location is the cytoplasm. The catalysed reaction is [protein]-peptidylproline (omega=180) = [protein]-peptidylproline (omega=0). Functionally, involved in protein export. Acts as a chaperone by maintaining the newly synthesized protein in an open conformation. Functions as a peptidyl-prolyl cis-trans isomerase. This Oleidesulfovibrio alaskensis (strain ATCC BAA-1058 / DSM 17464 / G20) (Desulfovibrio alaskensis) protein is Trigger factor.